The following is a 395-amino-acid chain: Fe(3+) ions import ATP-binding protein FbpC 2 (395 aa).

The segment at 1–21 (MHIAQELADETCNSPRGAGHA) is disordered. Positions 23–264 (LRYPSDRRTA…PKTLFVADFI (242 aa)) constitute an ABC transporter domain. 66–73 (GPSGCGKT) provides a ligand contact to ATP.

The protein belongs to the ABC transporter superfamily. Fe(3+) ion importer (TC 3.A.1.10) family. As to quaternary structure, the complex is composed of two ATP-binding proteins (FbpC), two transmembrane proteins (FbpB) and a solute-binding protein (FbpA).

Its subcellular location is the cell inner membrane. The catalysed reaction is Fe(3+)(out) + ATP + H2O = Fe(3+)(in) + ADP + phosphate + H(+). Its function is as follows. Part of the ABC transporter complex FbpABC involved in Fe(3+) ions import. Responsible for energy coupling to the transport system. The sequence is that of Fe(3+) ions import ATP-binding protein FbpC 2 from Rhizobium meliloti (strain 1021) (Ensifer meliloti).